The following is a 334-amino-acid chain: Nucleoid-associated protein YpsIP31758_2721 (334 aa).

Belongs to the YejK family.

It is found in the cytoplasm. The protein localises to the nucleoid. The chain is Nucleoid-associated protein YpsIP31758_2721 from Yersinia pseudotuberculosis serotype O:1b (strain IP 31758).